Here is a 221-residue protein sequence, read N- to C-terminus: F-box protein At1g55000 (221 aa).

In terms of domain architecture, F-box spans 7–46 (DTLIIIFQKLTVADLARASCVCKVWNSVATEDDLVVSAFT). Positions 74–118 (ISHRICRGDSVTSLAVKYAVQVMDIKRLNNMMSDHGIYSRDRLLI) constitute a LysM domain.

As to quaternary structure, part of a SCF (ASK-cullin-F-box) protein ligase complex. Interacts with SKP1A/ASK1, SKP1B/ASK2, ASK4, ASK11 and ASK13.

Its pathway is protein modification; protein ubiquitination. In terms of biological role, component of SCF(ASK-cullin-F-box) E3 ubiquitin ligase complexes, which may mediate the ubiquitination and subsequent proteasomal degradation of target proteins. The polypeptide is F-box protein At1g55000 (Arabidopsis thaliana (Mouse-ear cress)).